Reading from the N-terminus, the 98-residue chain is Protein S100-A13 (98 aa).

The EF-hand domain maps to S18–V53. The Ca(2+) site is built by S32, E37, D64, N66, D68, E70, and E75. Phosphoserine is present on S32.

This sequence belongs to the S-100 family. Homodimer. Part of a copper-dependent multiprotein complex containing S100A13, FGF1 and SYT1. Interacts with FGF1 and SYT1. Interacts with IL1A.

It localises to the cytoplasm. Its subcellular location is the secreted. In terms of biological role, plays a role in the export of proteins that lack a signal peptide and are secreted by an alternative pathway. Binds two calcium ions per subunit. Binds one copper ion. Binding of one copper ion does not interfere with calcium binding. Required for the copper-dependent stress-induced export of IL1A and FGF1. The calcium-free protein binds to lipid vesicles containing phosphatidylserine, but not to vesicles containing phosphatidylcholine. This Mus musculus (Mouse) protein is Protein S100-A13 (S100a13).